A 397-amino-acid polypeptide reads, in one-letter code: Acylalkylpyrone synthase csyB (397 aa).

CoA contacts are provided by residues lysine 50 and 50–57; that span reads KMLEINRK. Catalysis depends on cysteine 155, which acts as the Nucleophile. 214-215 contributes to the substrate binding site; it reads GD. Residues isoleucine 267, glycine 312, 312-315, tyrosine 314, and alanine 315 contribute to the CoA site; that span reads GGYA. Histidine 377 is a catalytic residue.

Belongs to the thiolase-like superfamily. Chalcone/stilbene synthases family. As to quaternary structure, homodimer.

Its function is as follows. Acylalkylpyrone synthase that catalyzes not only the polyketide chain elongation but also the one-pot condensation of two beta-ketoacyl units to produce the 3-acyl-4-hydroxy-6-alkyl-alpha-pyrone (AcAP) scaffold, a precursor of csypyrone B. The enzyme reaction is initiated by the loading of acetoacetyl-CoA onto Cys-155, and subsequent thioester bond cleavage by the nucleophilic water generates the beta-keto acid intermediate, which is placed within a pocket. The second beta-ketoacyl unit is then produced by polyketide chain elongation of fatty acyl-CoA with one molecule of malonyl-CoA, and the condensation with the beta-ketoacid generates the final products. Csypyrone B1 is the major product and contains a propanoic acid side-chain, whereas csypyrones B2 and B3 are minor compounds that contain butyric or pentanoic acid side-chains, respectively. The chain is Acylalkylpyrone synthase csyB from Aspergillus oryzae (strain ATCC 42149 / RIB 40) (Yellow koji mold).